An 87-amino-acid polypeptide reads, in one-letter code: NAD(P)H-quinone oxidoreductase subunit O (87 aa).

A compositionally biased stretch (basic and acidic residues) spans 1 to 10 (MSEQTGKVDD). The tract at residues 1-23 (MSEQTGKVDDSQSPPKVQKKLRK) is disordered.

Belongs to the complex I NdhO subunit family. NDH-1 can be composed of about 15 different subunits; different subcomplexes with different compositions have been identified which probably have different functions.

It localises to the cellular thylakoid membrane. The catalysed reaction is a plastoquinone + NADH + (n+1) H(+)(in) = a plastoquinol + NAD(+) + n H(+)(out). It catalyses the reaction a plastoquinone + NADPH + (n+1) H(+)(in) = a plastoquinol + NADP(+) + n H(+)(out). NDH-1 shuttles electrons from an unknown electron donor, via FMN and iron-sulfur (Fe-S) centers, to quinones in the respiratory and/or the photosynthetic chain. The immediate electron acceptor for the enzyme in this species is believed to be plastoquinone. Couples the redox reaction to proton translocation, and thus conserves the redox energy in a proton gradient. Cyanobacterial NDH-1 also plays a role in inorganic carbon-concentration. This chain is NAD(P)H-quinone oxidoreductase subunit O, found in Prochlorococcus marinus (strain NATL2A).